Here is a 344-residue protein sequence, read N- to C-terminus: Dihydroorotase (344 aa).

The Zn(2+) site is built by H13 and H15. Residues 15–17 (HLR) and N41 each bind substrate. 3 residues coordinate Zn(2+): K98, H135, and H173. At K98 the chain carries N6-carboxylysine. Residue H135 coordinates substrate. Position 218 (L218) interacts with substrate. A Zn(2+)-binding site is contributed by D247. Residue D247 is part of the active site. 2 residues coordinate substrate: H251 and A263.

Belongs to the metallo-dependent hydrolases superfamily. DHOase family. Class II DHOase subfamily. In terms of assembly, homodimer. It depends on Zn(2+) as a cofactor.

It carries out the reaction (S)-dihydroorotate + H2O = N-carbamoyl-L-aspartate + H(+). Its pathway is pyrimidine metabolism; UMP biosynthesis via de novo pathway; (S)-dihydroorotate from bicarbonate: step 3/3. Catalyzes the reversible cyclization of carbamoyl aspartate to dihydroorotate. The chain is Dihydroorotase from Neisseria gonorrhoeae (strain NCCP11945).